The primary structure comprises 470 residues: Neuraminidase (470 aa).

The Intravirion portion of the chain corresponds to 1–6 (MNPNQK). A helical transmembrane segment spans residues 7 to 27 (IITIGSICMAIGIISLILQIG). The segment at 11 to 33 (GSICMAIGIISLILQIGNIISIW) is involved in apical transport and lipid raft association. Topologically, residues 28-470 (NIISIWVSHS…GAELPFTIDK (443 aa)) are virion surface. A hypervariable stalk region region spans residues 36 to 90 (HSIQTGSQNHTGICNQRIITYENSTWVNQTYVNISNTNVVAGKDTTSMTLAGNSS). Residues N44, N58, N63, N68, and N88 are each glycosylated (N-linked (GlcNAc...) asparagine; by host). Residues 91–470 (LCPIRGWAIY…GAELPFTIDK (380 aa)) are head of neuraminidase. Cystine bridges form between C92-C417, C124-C129, C184-C231, C233-C238, C279-C292, C281-C290, C318-C335, and C421-C447. Substrate is bound at residue R118. The N-linked (GlcNAc...) asparagine; by host glycan is linked to N146. D151 (proton donor/acceptor) is an active-site residue. R152 is a binding site for substrate. N235 is a glycosylation site (N-linked (GlcNAc...) asparagine; by host). 277 to 278 (EE) lines the substrate pocket. R293 is a binding site for substrate. Positions 294, 298, and 324 each coordinate Ca(2+). N-linked (GlcNAc...) asparagine; by host glycosylation occurs at N365. A substrate-binding site is contributed by R368. Catalysis depends on Y402, which acts as the Nucleophile. N455 is a glycosylation site (N-linked (GlcNAc...) asparagine; by host).

It belongs to the glycosyl hydrolase 34 family. As to quaternary structure, homotetramer. The cofactor is Ca(2+). N-glycosylated.

Its subcellular location is the virion membrane. It is found in the host apical cell membrane. The enzyme catalyses Hydrolysis of alpha-(2-&gt;3)-, alpha-(2-&gt;6)-, alpha-(2-&gt;8)- glycosidic linkages of terminal sialic acid residues in oligosaccharides, glycoproteins, glycolipids, colominic acid and synthetic substrates.. Its activity is regulated as follows. Inhibited by the neuraminidase inhibitors zanamivir (Relenza) and oseltamivir (Tamiflu). These drugs interfere with the release of progeny virus from infected cells and are effective against all influenza strains. Resistance to neuraminidase inhibitors is quite rare. In terms of biological role, catalyzes the removal of terminal sialic acid residues from viral and cellular glycoconjugates. Cleaves off the terminal sialic acids on the glycosylated HA during virus budding to facilitate virus release. Additionally helps virus spread through the circulation by further removing sialic acids from the cell surface. These cleavages prevent self-aggregation and ensure the efficient spread of the progeny virus from cell to cell. Otherwise, infection would be limited to one round of replication. Described as a receptor-destroying enzyme because it cleaves a terminal sialic acid from the cellular receptors. May facilitate viral invasion of the upper airways by cleaving the sialic acid moieties on the mucin of the airway epithelial cells. Likely to plays a role in the budding process through its association with lipid rafts during intracellular transport. May additionally display a raft-association independent effect on budding. Plays a role in the determination of host range restriction on replication and virulence. Sialidase activity in late endosome/lysosome traffic seems to enhance virus replication. In Aves (Human), this protein is Neuraminidase.